Reading from the N-terminus, the 193-residue chain is Pyridoxal 5'-phosphate synthase subunit PdxT (193 aa).

48–50 (GES) contacts L-glutamine. The active-site Nucleophile is the Cys-80. L-glutamine is bound by residues Arg-112 and 140–141 (IR). Active-site charge relay system residues include His-176 and Glu-178.

Belongs to the glutaminase PdxT/SNO family. In the presence of PdxS, forms a dodecamer of heterodimers. Only shows activity in the heterodimer.

The catalysed reaction is aldehydo-D-ribose 5-phosphate + D-glyceraldehyde 3-phosphate + L-glutamine = pyridoxal 5'-phosphate + L-glutamate + phosphate + 3 H2O + H(+). The enzyme catalyses L-glutamine + H2O = L-glutamate + NH4(+). It functions in the pathway cofactor biosynthesis; pyridoxal 5'-phosphate biosynthesis. Catalyzes the hydrolysis of glutamine to glutamate and ammonia as part of the biosynthesis of pyridoxal 5'-phosphate. The resulting ammonia molecule is channeled to the active site of PdxS. The protein is Pyridoxal 5'-phosphate synthase subunit PdxT of Mycolicibacterium smegmatis (strain ATCC 700084 / mc(2)155) (Mycobacterium smegmatis).